A 679-amino-acid polypeptide reads, in one-letter code: Patatin-like phospholipase 1 (679 aa).

Disordered stretches follow at residues 19–45 (FSDD…NAEN) and 155–194 (GEYE…NYNS). Composition is skewed to polar residues over residues 35–45 (YSGSETQNAEN) and 162–176 (TSSY…NTVG). The segment covering 177 to 188 (SEKEETENKNEE) has biased composition (basic and acidic residues). The PNPLA domain maps to 338 to 544 (LSLDGGGILT…KASNPALIAL (207 aa)). The short motif at 381-385 (GTSAG) is the GXSXG element. The active-site Nucleophile is the S383. The Proton acceptor role is filled by D531. The DGA/G motif lies at 531 to 533 (DGA).

It belongs to the patatin family.

The protein localises to the cytoplasm. It catalyses the reaction a 1,2-diacyl-sn-glycero-3-phosphocholine + H2O = a 1-acyl-sn-glycero-3-phosphocholine + a fatty acid + H(+). The catalysed reaction is 1,2-dihexadecanoyl-sn-glycero-3-phosphocholine + H2O = 1-hexadecanoyl-sn-glycero-3-phosphocholine + hexadecanoate + H(+). Its function is as follows. Hydrolyzes the ester bond of the fatty acyl group attached at the sn-2 position of phospholipids such as phosphatidylcholine. Involved in gametogenesis; however, it is not clear whether it is involved in gametocytes development in host erythrocytes or in gametocyte activation in the mosquito midgut. Involved in gametocyte development in host erythrocytes; however, not involved in gametocytes activation including male gamete exflagellation. Involved in the rounding up of gametocytes following activation in the mosquito midgut; however, not required for gametocyte development in host erythrocytes. Required for exflagellation of activated male gametocytes. Involved in gametocytes egress from host erythrocytes by promoting the relocalization of perforin-like protein PLP2-containing vesicles to the periphery of gametocytes; PLP2 secretion is required for permeabilization of the erythrocyte membrane and thus, promotes gametocyte egress. Dispensable for asexual blood stage development. The chain is Patatin-like phospholipase 1 from Plasmodium falciparum (isolate NF54).